The chain runs to 305 residues: Glycine--tRNA ligase alpha subunit (305 aa).

The protein belongs to the class-II aminoacyl-tRNA synthetase family. In terms of assembly, tetramer of two alpha and two beta subunits.

It localises to the cytoplasm. It carries out the reaction tRNA(Gly) + glycine + ATP = glycyl-tRNA(Gly) + AMP + diphosphate. This Streptococcus pneumoniae serotype 4 (strain ATCC BAA-334 / TIGR4) protein is Glycine--tRNA ligase alpha subunit.